Reading from the N-terminus, the 474-residue chain is Glutamyl-tRNA(Gln) amidotransferase subunit A (474 aa).

Catalysis depends on charge relay system residues lysine 76 and serine 151. Catalysis depends on serine 175, which acts as the Acyl-ester intermediate.

Belongs to the amidase family. GatA subfamily. Heterotrimer of A, B and C subunits.

It carries out the reaction L-glutamyl-tRNA(Gln) + L-glutamine + ATP + H2O = L-glutaminyl-tRNA(Gln) + L-glutamate + ADP + phosphate + H(+). Allows the formation of correctly charged Gln-tRNA(Gln) through the transamidation of misacylated Glu-tRNA(Gln) in organisms which lack glutaminyl-tRNA synthetase. The reaction takes place in the presence of glutamine and ATP through an activated gamma-phospho-Glu-tRNA(Gln). The protein is Glutamyl-tRNA(Gln) amidotransferase subunit A of Chlorobium chlorochromatii (strain CaD3).